The following is a 265-amino-acid chain: Tryptophan synthase alpha chain (265 aa).

Active-site proton acceptor residues include Glu-49 and Asp-60.

It belongs to the TrpA family. In terms of assembly, tetramer of two alpha and two beta chains.

The enzyme catalyses (1S,2R)-1-C-(indol-3-yl)glycerol 3-phosphate + L-serine = D-glyceraldehyde 3-phosphate + L-tryptophan + H2O. Its pathway is amino-acid biosynthesis; L-tryptophan biosynthesis; L-tryptophan from chorismate: step 5/5. Its function is as follows. The alpha subunit is responsible for the aldol cleavage of indoleglycerol phosphate to indole and glyceraldehyde 3-phosphate. The protein is Tryptophan synthase alpha chain of Ralstonia nicotianae (strain ATCC BAA-1114 / GMI1000) (Ralstonia solanacearum).